We begin with the raw amino-acid sequence, 417 residues long: Serine hydroxymethyltransferase (417 aa).

Residues Leu120 and 124–126 (GHL) each bind (6S)-5,6,7,8-tetrahydrofolate. Residue Lys229 is modified to N6-(pyridoxal phosphate)lysine.

Belongs to the SHMT family. As to quaternary structure, homodimer. Pyridoxal 5'-phosphate is required as a cofactor.

Its subcellular location is the cytoplasm. It carries out the reaction (6R)-5,10-methylene-5,6,7,8-tetrahydrofolate + glycine + H2O = (6S)-5,6,7,8-tetrahydrofolate + L-serine. It participates in one-carbon metabolism; tetrahydrofolate interconversion. Its pathway is amino-acid biosynthesis; glycine biosynthesis; glycine from L-serine: step 1/1. Its function is as follows. Catalyzes the reversible interconversion of serine and glycine with tetrahydrofolate (THF) serving as the one-carbon carrier. This reaction serves as the major source of one-carbon groups required for the biosynthesis of purines, thymidylate, methionine, and other important biomolecules. Also exhibits THF-independent aldolase activity toward beta-hydroxyamino acids, producing glycine and aldehydes, via a retro-aldol mechanism. The polypeptide is Serine hydroxymethyltransferase (Anaeromyxobacter sp. (strain K)).